The chain runs to 648 residues: Dystrotelin (648 aa).

Residues 223 to 279 (QHRVHCHACKAFPITGLRYRCLKCLNVHLCQSCFLTERRSRKHKPSHSVLEYCTQPS) form a ZZ-type zinc finger. Zn(2+) is bound by residues cysteine 228, cysteine 231, cysteine 243, cysteine 246, cysteine 252, cysteine 255, histidine 265, and histidine 269. Residues 367–446 (QRETAELQKD…LDTVRHLLSL (80 aa)) adopt a coiled-coil conformation. Residues 455–474 (SHSNLQLEQDGSINENNWTQ) are compositionally biased toward polar residues. 2 disordered regions span residues 455-509 (SHSN…DTLY) and 536-557 (QREE…EGLP). Over residues 479 to 502 (KPHESSSTEHEVEERGTRQERRFE) the composition is skewed to basic and acidic residues. Residues 538-548 (EEEELQEEEEG) show a composition bias toward acidic residues.

It localises to the cell membrane. The protein is Dystrotelin (dytn) of Danio rerio (Zebrafish).